Here is a 559-residue protein sequence, read N- to C-terminus: Laccase-7 (559 aa).

The N-terminal stretch at 1–28 (MVIPWCSSMMRLLWFLFALLLARSVADA) is a signal peptide. Asparagine 32, asparagine 47, and asparagine 82 each carry an N-linked (GlcNAc...) asparagine glycan. Plastocyanin-like domains lie at 36 to 152 (TVES…PRNG) and 163 to 316 (EVPI…YNTT). Positions 86 and 88 each coordinate Cu cation. 2 N-linked (GlcNAc...) asparagine glycosylation sites follow: asparagine 112 and asparagine 120. Cu cation is bound by residues histidine 131 and histidine 133. N-linked (GlcNAc...) asparagine glycans are attached at residues asparagine 151, asparagine 210, asparagine 220, asparagine 257, asparagine 278, asparagine 314, asparagine 363, and asparagine 443. In terms of domain architecture, Plastocyanin-like 3 spans 396 to 543 (FRLPSQMSLL…GMVFAVDNGT (148 aa)). 3 residues coordinate Cu cation: histidine 461, histidine 464, and histidine 466. N-linked (GlcNAc...) asparagine glycosylation is present at asparagine 484. 4 residues coordinate Cu cation: histidine 522, cysteine 523, histidine 524, and histidine 528. The N-linked (GlcNAc...) asparagine glycan is linked to asparagine 541.

This sequence belongs to the multicopper oxidase family. Cu cation serves as cofactor.

The protein localises to the secreted. It localises to the extracellular space. It is found in the apoplast. It catalyses the reaction 4 hydroquinone + O2 = 4 benzosemiquinone + 2 H2O. Functionally, lignin degradation and detoxification of lignin-derived products. This chain is Laccase-7 (LAC7), found in Oryza sativa subsp. japonica (Rice).